Here is a 553-residue protein sequence, read N- to C-terminus: Methyl-coenzyme M reductase subunit alpha (553 aa).

Glutamine 151 serves as a coordination point for coenzyme F430. Coenzyme B-binding positions include arginine 229, 260–261 (KH), and arginine 274. Residues tyrosine 336 and tyrosine 447 each contribute to the coenzyme M site.

The protein belongs to the methyl-coenzyme M reductase alpha subunit family. As to quaternary structure, MCR is a hexamer of two alpha, two beta, and two gamma chains, forming a dimer of heterotrimers. Coenzyme F430 is required as a cofactor.

The protein resides in the cytoplasm. It carries out the reaction coenzyme B + methyl-coenzyme M = methane + coenzyme M-coenzyme B heterodisulfide. Its pathway is one-carbon metabolism; methyl-coenzyme M reduction; methane from methyl-coenzyme M: step 1/1. Its function is as follows. Component of the methyl-coenzyme M reductase (MCR) I that catalyzes the reductive cleavage of methyl-coenzyme M (CoM-S-CH3 or 2-(methylthio)ethanesulfonate) using coenzyme B (CoB or 7-mercaptoheptanoylthreonine phosphate) as reductant which results in the production of methane and the mixed heterodisulfide of CoB and CoM (CoM-S-S-CoB). This is the final step in methanogenesis. The polypeptide is Methyl-coenzyme M reductase subunit alpha (mcrA) (Methanococcus vannielii).